We begin with the raw amino-acid sequence, 176 residues long: Shikimate kinase (176 aa).

14–19 (GAGKSS) is an ATP binding site. Mg(2+) is bound at residue Ser-18. Asp-36, Arg-60, and Gly-82 together coordinate substrate. Arg-120 is a binding site for ATP. Arg-138 is a substrate binding site.

It belongs to the shikimate kinase family. In terms of assembly, monomer. The cofactor is Mg(2+).

The protein localises to the cytoplasm. It catalyses the reaction shikimate + ATP = 3-phosphoshikimate + ADP + H(+). The protein operates within metabolic intermediate biosynthesis; chorismate biosynthesis; chorismate from D-erythrose 4-phosphate and phosphoenolpyruvate: step 5/7. In terms of biological role, catalyzes the specific phosphorylation of the 3-hydroxyl group of shikimic acid using ATP as a cosubstrate. The polypeptide is Shikimate kinase (Dehalococcoides mccartyi (strain ATCC BAA-2100 / JCM 16839 / KCTC 5957 / BAV1)).